An 803-amino-acid polypeptide reads, in one-letter code: MEAEGSSVPARAGSHEGSDSSGGAALKAPKHLWRHEQHHQYPLRQPQFRLLHPHHHLPPPPPPSPQPQLQPPPPPPLPPPPPPPGATRGRYASSGASRVRHRGYSDTERYLYCRAMDRTSYAVETGHRPGLKKSRMSWPSSFQGLRRFDVDNGTSAGRSPLDPMTSPGSGLILQANFVHSQRRESFLYRSDSDYDLSPKSMSRNSSIASDIHGDDLIVTPFAQVLASLRTVRNNFAALTNLQDRAPSKRSPMCNQPSINKATITEEAYQKLASETLEELDWCLDQLETLQTRHSVSEMASNKFKRMLNRELTHLSEMSRSGNQVSEYISNTFLDKQHEVEIPSPTQKEKEKKKRPMSQISGVKKLMHSSSLTNSCIPRFGVKTEQEDVLAKELEDVNKWGLHVFRIAELSGNRPLTVIMHTIFQERDLLKTFKIPVDTLITYLMTLEDHYHADVAYHNNIHAADVVQSTHVLLSTPALEAVFTDLEILAAIFASAIHDVDHPGVSNQFLINTNSELALMYNDSSVLENHHLAVGFKLLQEENCDIFQNLTKKQRQSLRKMAIDIVLATDMSKHMNLLADLKTMVETKKVTSSGVLLLDNYSDRIQVLQNMVHCADLSNPTKPLQLYRQWTDRIMEEFFRQGDRERERGMEISPMCDKHNASVEKSQVGFIDYIVHPLWETWADLVHPDAQDILDTLEDNREWYQSTIPQSPSPAPDDQEDGRQGQTEKFQFELTLEEDGESDTEKDSGSQVEEDTSCSDSKTLCTQDSESTEIPLDEQVEEEAVAEEESQPQTGVADDCCPDT.

The segment at 1–103 is disordered; the sequence is MEAEGSSVPA…SGASRVRHRG (103 aa). 2 positions are modified to phosphoserine: histidine 52 and histidine 56. Residues 58 to 85 are compositionally biased toward pro residues; it reads PPPPPPSPQPQLQPPPPPPLPPPPPPPG. A phosphoserine mark is found at serine 137, serine 294, serine 296, serine 343, and serine 370. Residues 338–358 form a disordered region; that stretch reads EVEIPSPTQKEKEKKKRPMSQ. The 330-residue stretch at 381 to 710 folds into the PDEase domain; that stretch reads VKTEQEDVLA…EWYQSTIPQS (330 aa). A Glycyl lysine isopeptide (Lys-Gly) (interchain with G-Cter in SUMO) cross-link involves residue lysine 382. Histidine 457 acts as the Proton donor in catalysis. 3',5'-cyclic AMP is bound at residue histidine 457. Residue histidine 457 participates in AMP binding. Residues histidine 461, histidine 497, aspartate 498, and aspartate 615 each coordinate Zn(2+). 5 residues coordinate AMP: aspartate 498, aspartate 615, asparagine 618, glutamine 666, and phenylalanine 669. Aspartate 498 is a Mg(2+) binding site. Aspartate 498 contacts Mn(2+). 3',5'-cyclic AMP contacts are provided by glutamine 666 and phenylalanine 669. Disordered stretches follow at residues 705–724 and 732–803; these read STIP…GRQG and ELTL…CPDT. A compositionally biased stretch (polar residues) spans 757-768; it reads CSDSKTLCTQDS. The span at 774-789 shows a compositional bias: acidic residues; sequence PLDEQVEEEAVAEEES.

This sequence belongs to the cyclic nucleotide phosphodiesterase family. PDE4 subfamily. In terms of assembly, homodimer for the long isoforms. Isoforms with truncated N-termini are monomeric. Binds ARRB2. Isoform 33 is part of a ternary complex containing PRKAR2A, PRKAR2B and AKAP9. Identified in a complex composed of RYR1, PDE4D, PKA, FKBP1A and protein phosphatase 1 (PP1). Interacts with PDE4DIP. Isoform 5 interacts (via N-terminal region) with SHANK2 (via proline-rich region); the interaction is increased in a PKA-dependent manner. Isoform 33, isoform 4, isoform 7, isoform 8 and isoform 9 but not isoform 32 and isoform 6 interact with SHANK2. Isoform 31 interacts weakly with SHANK2. Requires Zn(2+) as cofactor. Mg(2+) serves as cofactor. The cofactor is Mn(2+). Isoform 1 and isoform 9 are rapidly activated by PKA through phosphorylation. Long isoforms that share a conserved PKA phosphorylation site in the N-terminus are also activated. Post-translationally, sumoylation of long isoforms by PIAS4 augments their activation by PKA phosphorylation and represses their inhibition by ERK phosphorylation. In terms of tissue distribution, expressed in epithelial cells. Isoform 33, isoform 4, isoform 5 and isoform 9 are expressed in brain. Isoform 33, isoform 5, isoform 8 and isoform 9 are expressed in heart (at protein level). Isoform 4 and isoform 6 are strongly expressed in cortex and cerebellum. Isoform 7 is strongly expressed in cortex and testis; weakly expressed in kidney, lung, spleen and cerebellum. Isoform 8 is strongly expressed in lung, heart and liver. Isoform 31, isoform 32, isoform 33, isoform 5 and isoform 9 are widely distributed.

The protein resides in the apical cell membrane. It is found in the cytoplasm. It localises to the membrane. Its subcellular location is the cytoskeleton. The protein localises to the microtubule organizing center. The protein resides in the centrosome. It carries out the reaction 3',5'-cyclic AMP + H2O = AMP + H(+). The protein operates within purine metabolism; 3',5'-cyclic AMP degradation; AMP from 3',5'-cyclic AMP: step 1/1. Activated by phosphatidic acid. Inhibited by rolipram. Functionally, hydrolyzes the second messenger cAMP, which is a key regulator of many important physiological processes. This Rattus norvegicus (Rat) protein is 3',5'-cyclic-AMP phosphodiesterase 4D (Pde4d).